Consider the following 501-residue polypeptide: Aspartyl/glutamyl-tRNA(Asn/Gln) amidotransferase subunit B (501 aa).

Residues 272 to 291 are disordered; the sequence is QETRHYQETDGTTSKGRPKE.

Belongs to the GatB/GatE family. GatB subfamily. In terms of assembly, heterotrimer of A, B and C subunits.

It catalyses the reaction L-glutamyl-tRNA(Gln) + L-glutamine + ATP + H2O = L-glutaminyl-tRNA(Gln) + L-glutamate + ADP + phosphate + H(+). The enzyme catalyses L-aspartyl-tRNA(Asn) + L-glutamine + ATP + H2O = L-asparaginyl-tRNA(Asn) + L-glutamate + ADP + phosphate + 2 H(+). Its function is as follows. Allows the formation of correctly charged Asn-tRNA(Asn) or Gln-tRNA(Gln) through the transamidation of misacylated Asp-tRNA(Asn) or Glu-tRNA(Gln) in organisms which lack either or both of asparaginyl-tRNA or glutaminyl-tRNA synthetases. The reaction takes place in the presence of glutamine and ATP through an activated phospho-Asp-tRNA(Asn) or phospho-Glu-tRNA(Gln). This is Aspartyl/glutamyl-tRNA(Asn/Gln) amidotransferase subunit B from Corynebacterium efficiens (strain DSM 44549 / YS-314 / AJ 12310 / JCM 11189 / NBRC 100395).